We begin with the raw amino-acid sequence, 1139 residues long: Autophagy-related protein 23 (1139 aa).

Disordered stretches follow at residues 1-148 (MFQR…EMSP), 225-327 (STDK…YDDE), 356-388 (LTTA…SVKD), 475-569 (KNEK…DTAG), 648-674 (KKIS…KTEY), 720-767 (RQES…RETE), 786-828 (EDAQ…SKLR), 935-961 (AAVE…TEDL), and 977-1012 (HERD…ELRT). The segment covering 7–18 (SAIDRTIAEEQA) has biased composition (basic and acidic residues). Low complexity predominate over residues 19 to 37 (RQQTATQSRSPSRTGSTSS). 2 coiled-coil regions span residues 142 to 170 (KLQE…LLRS) and 215 to 259 (DMVM…STDQ). 4 stretches are compositionally biased toward basic and acidic residues: residues 225–247 (STDK…KLEE), 261–273 (KTSD…DAQD), 373–385 (ATRE…DVAS), and 475–494 (KNEK…KLES). Residues 323-495 (SYDDEIPQLQ…TDLTKKLESK (173 aa)) are a coiled coil. Positions 496 to 522 (PAPAMLTPAATPMPTVLQPAATSATAA) are enriched in low complexity. Residues 526–537 (GKKKNNKKKKGK) are compositionally biased toward basic residues. The stretch at 566-1067 (DTAGNAELKA…AAQTKLVASS (502 aa)) forms a coiled coil. The segment covering 651–661 (SSSTSDAEASS) has biased composition (low complexity). Composition is skewed to basic and acidic residues over residues 728 to 767 (ATKE…RETE), 786 to 815 (EDAQ…KAEQ), 935 to 945 (AAVEERDRIED), and 977 to 1011 (HERD…DELR). One can recognise a GRIP domain in the interval 1082–1132 (SPAGAPDTVYLKTILLQFLEQKDTKLRAQLVPVLGKLLRFDKTDEQKWQKA).

It belongs to the ATG23 family. As to quaternary structure, forms a complex with ATG9 and ATG27.

Its subcellular location is the cytoplasm. The protein resides in the preautophagosomal structure membrane. In terms of biological role, required for cytoplasm to vacuole transport (Cvt) vesicle formation and efficient autophagy. Plays a role in ATG protein retrieval from the pre-autophagosomal structure (PAS) and is especially required for autophagy-dependent cycling of ATG9. Autophagy is required for proper vegetative growth, asexual/sexual reproduction, and full virulence. Autophagy is particularly involved in the biosynthesis of deoxynivalenol (DON), an important virulence determinant. In Gibberella zeae (strain ATCC MYA-4620 / CBS 123657 / FGSC 9075 / NRRL 31084 / PH-1) (Wheat head blight fungus), this protein is Autophagy-related protein 23.